Reading from the N-terminus, the 273-residue chain is Small ribosomal subunit protein uS2 (273 aa).

The protein belongs to the universal ribosomal protein uS2 family.

This chain is Small ribosomal subunit protein uS2, found in Mycolicibacterium vanbaalenii (strain DSM 7251 / JCM 13017 / BCRC 16820 / KCTC 9966 / NRRL B-24157 / PYR-1) (Mycobacterium vanbaalenii).